The chain runs to 218 residues: Protein-L-isoaspartate O-methyltransferase 1 (218 aa).

Ser-69 is a catalytic residue.

This sequence belongs to the methyltransferase superfamily. L-isoaspartyl/D-aspartyl protein methyltransferase family.

The protein resides in the cytoplasm. The enzyme catalyses [protein]-L-isoaspartate + S-adenosyl-L-methionine = [protein]-L-isoaspartate alpha-methyl ester + S-adenosyl-L-homocysteine. Catalyzes the methyl esterification of L-isoaspartyl residues in peptides and proteins that result from spontaneous decomposition of normal L-aspartyl and L-asparaginyl residues. It plays a role in the repair and/or degradation of damaged proteins. The protein is Protein-L-isoaspartate O-methyltransferase 1 of Marinobacter nauticus (strain ATCC 700491 / DSM 11845 / VT8) (Marinobacter aquaeolei).